A 394-amino-acid chain; its full sequence is Elongation factor Tu (394 aa).

The tr-type G domain occupies 10-204; it reads KPHVNIGTIG…AVDSYIPQPI (195 aa). The tract at residues 19–26 is G1; sequence GHVDHGKT. Residue 19–26 coordinates GTP; that stretch reads GHVDHGKT. T26 contacts Mg(2+). Residues 60 to 64 form a G2 region; the sequence is GITIS. The segment at 81-84 is G3; that stretch reads DCPG. GTP contacts are provided by residues 81–85 and 136–139; these read DCPGH and NKVD. The tract at residues 136-139 is G4; the sequence is NKVD. Residues 174 to 176 form a G5 region; it reads SAL.

Belongs to the TRAFAC class translation factor GTPase superfamily. Classic translation factor GTPase family. EF-Tu/EF-1A subfamily. In terms of assembly, monomer.

It localises to the cytoplasm. It catalyses the reaction GTP + H2O = GDP + phosphate + H(+). In terms of biological role, GTP hydrolase that promotes the GTP-dependent binding of aminoacyl-tRNA to the A-site of ribosomes during protein biosynthesis. This is Elongation factor Tu from Rickettsia typhi (strain ATCC VR-144 / Wilmington).